The chain runs to 151 residues: Superoxide dismutase [Cu-Zn] 4 (151 aa).

3 residues coordinate Cu cation: His45, His47, and His62. Cysteines 56 and 145 form a disulfide. Residues His62, His70, His79, and Asp82 each coordinate Zn(2+). His120 is a Cu cation binding site.

It belongs to the Cu-Zn superoxide dismutase family. In terms of assembly, homodimer. It depends on Cu cation as a cofactor. Zn(2+) is required as a cofactor.

Its subcellular location is the cytoplasm. The catalysed reaction is 2 superoxide + 2 H(+) = H2O2 + O2. Its function is as follows. Destroys radicals which are normally produced within the cells and which are toxic to biological systems. Protects spores from cellular damage caused by UV LIGHT. This chain is Superoxide dismutase [Cu-Zn] 4 (sodD), found in Dictyostelium discoideum (Social amoeba).